The primary structure comprises 224 residues: Putative adhesin RF_1314 (224 aa).

The N-terminal stretch at Met1–Ala22 is a signal peptide.

This is Putative adhesin RF_1314 from Rickettsia felis (strain ATCC VR-1525 / URRWXCal2) (Rickettsia azadi).